We begin with the raw amino-acid sequence, 103 residues long: Small ribosomal subunit protein uS10 (103 aa).

Belongs to the universal ribosomal protein uS10 family. As to quaternary structure, part of the 30S ribosomal subunit.

Functionally, involved in the binding of tRNA to the ribosomes. The polypeptide is Small ribosomal subunit protein uS10 (Korarchaeum cryptofilum (strain OPF8)).